The primary structure comprises 174 residues: Large ribosomal subunit protein uL10 (174 aa).

The protein belongs to the universal ribosomal protein uL10 family. In terms of assembly, part of the ribosomal stalk of the 50S ribosomal subunit. The N-terminus interacts with L11 and the large rRNA to form the base of the stalk. The C-terminus forms an elongated spine to which L12 dimers bind in a sequential fashion forming a multimeric L10(L12)X complex.

Forms part of the ribosomal stalk, playing a central role in the interaction of the ribosome with GTP-bound translation factors. The chain is Large ribosomal subunit protein uL10 from Anaeromyxobacter dehalogenans (strain 2CP-C).